We begin with the raw amino-acid sequence, 471 residues long: Adenosylhomocysteinase (471 aa).

Residues Thr-60, Asp-135, and Glu-196 each coordinate substrate. Position 197 to 199 (Thr-197 to Thr-199) interacts with NAD(+). Substrate contacts are provided by Lys-226 and Asp-230. NAD(+) is bound by residues Asn-231, Gly-260–Gly-265, Glu-283, Asn-318, Ile-339–His-341, and Asn-387.

Belongs to the adenosylhomocysteinase family. It depends on NAD(+) as a cofactor.

It is found in the cytoplasm. It carries out the reaction S-adenosyl-L-homocysteine + H2O = L-homocysteine + adenosine. Its pathway is amino-acid biosynthesis; L-homocysteine biosynthesis; L-homocysteine from S-adenosyl-L-homocysteine: step 1/1. Its function is as follows. May play a key role in the regulation of the intracellular concentration of adenosylhomocysteine. The chain is Adenosylhomocysteinase from Pelodictyon phaeoclathratiforme (strain DSM 5477 / BU-1).